A 301-amino-acid polypeptide reads, in one-letter code: D-psicose 3-epimerase (301 aa).

Substrate is bound at residue Y16. E162 (proton donor/acceptor) is an active-site residue. Residue E162 coordinates Mn(2+). Substrate-binding positions include E168 and 195-198 (DTFH). Mn(2+)-binding residues include D195 and H221. R227 serves as a coordination point for substrate. E256 acts as the Proton donor/acceptor in catalysis. E256 contributes to the Mn(2+) binding site.

It belongs to the hyi family. As to quaternary structure, homotetramer. Mn(2+) is required as a cofactor. Co(2+) serves as cofactor.

It carries out the reaction D-allulose = keto-D-fructose. With respect to regulation, completely inhibited by EDTA and partially inhibited by Zn(2+), Mg(2+) and Cu(2+). Its function is as follows. Involved in the biosynthesis of D-psicose. Catalyzes the reversible epimerization of D-fructose at the C3 position to yield D-psicose. The enzyme is highly specific for D-psicose and shows very low activity with D-tagatose. This is D-psicose 3-epimerase from Enterocloster bolteae (strain ATCC BAA-613 / DSM 15670 / CCUG 46953 / JCM 12243 / WAL 16351) (Clostridium bolteae).